The following is a 192-amino-acid chain: Holliday junction branch migration complex subunit RuvA (192 aa).

Residues 1–64 form a domain I region; that stretch reads MIGRLTGILA…EDGHYLYGFL (64 aa). The interval 65 to 143 is domain II; the sequence is TEAERFAFRQ…DATGVSLHPA (79 aa). Residues 144–149 form a flexible linker region; sequence VDDSKQ. The domain III stretch occupies residues 149–192; it reads QDISNALLALGYNEKEAASAMKQLPADVSTSDGIRAALKLLSKV.

It belongs to the RuvA family. As to quaternary structure, homotetramer. Forms an RuvA(8)-RuvB(12)-Holliday junction (HJ) complex. HJ DNA is sandwiched between 2 RuvA tetramers; dsDNA enters through RuvA and exits via RuvB. An RuvB hexamer assembles on each DNA strand where it exits the tetramer. Each RuvB hexamer is contacted by two RuvA subunits (via domain III) on 2 adjacent RuvB subunits; this complex drives branch migration. In the full resolvosome a probable DNA-RuvA(4)-RuvB(12)-RuvC(2) complex forms which resolves the HJ.

The protein localises to the cytoplasm. Functionally, the RuvA-RuvB-RuvC complex processes Holliday junction (HJ) DNA during genetic recombination and DNA repair, while the RuvA-RuvB complex plays an important role in the rescue of blocked DNA replication forks via replication fork reversal (RFR). RuvA specifically binds to HJ cruciform DNA, conferring on it an open structure. The RuvB hexamer acts as an ATP-dependent pump, pulling dsDNA into and through the RuvAB complex. HJ branch migration allows RuvC to scan DNA until it finds its consensus sequence, where it cleaves and resolves the cruciform DNA. The chain is Holliday junction branch migration complex subunit RuvA from Dechloromonas aromatica (strain RCB).